Consider the following 376-residue polypeptide: Phytanoyl-CoA hydroxylase-interacting protein-like (376 aa).

2 positions are modified to phosphoserine: Ser12 and Ser15. An N-linked (GlcNAc...) asparagine glycan is attached at Asn23. A Phosphoserine modification is found at Ser25. Asn37 is a glycosylation site (N-linked (GlcNAc...) asparagine). The Fibronectin type-III domain occupies 52 to 161 (VPHNIKISNI…EIIEFCTADY (110 aa)).

It belongs to the PHYHIP family.

In terms of biological role, may play a role in the development of the central system. In Homo sapiens (Human), this protein is Phytanoyl-CoA hydroxylase-interacting protein-like (PHYHIPL).